A 603-amino-acid polypeptide reads, in one-letter code: NADPH-dependent diflavin oxidoreductase 1 (603 aa).

A Flavodoxin-like domain is found at 8-152 (VLVLYGSETG…SFVRWTGRLY (145 aa)). Residues 14 to 19 (SETGNA), 61 to 64 (STTG), 99 to 108 (LGDSTYLKFN), and Glu-134 contribute to the FMN site. Residues 210–457 (PDGWTATLVG…RKPVLSPIHG (248 aa)) form the FAD-binding FR-type domain. Residues Arg-358, 388 to 391 (RDFS), and 429 to 432 (GLCS) each bind FAD. NADP(+)-binding positions include Thr-472, 528 to 529 (SR), and 534 to 538 (KIYVQ). FAD is bound at residue Trp-603.

It belongs to the NADPH-dependent diflavin oxidoreductase NDOR1 family. This sequence in the N-terminal section; belongs to the flavodoxin family. In the C-terminal section; belongs to the flavoprotein pyridine nucleotide cytochrome reductase family. In terms of assembly, interacts with DRE2; as part of the cytosolic iron-sulfur (Fe-S) protein assembly (CIA) machinery. FAD serves as cofactor. FMN is required as a cofactor.

The protein resides in the cytoplasm. It localises to the mitochondrion. It carries out the reaction 2 oxidized [2Fe-2S]-[protein] + NADPH = 2 reduced [2Fe-2S]-[protein] + NADP(+) + H(+). Its function is as follows. NADPH-dependent reductase which is a central component of the cytosolic iron-sulfur (Fe-S) protein assembly (CIA) machinery. Transfers electrons from NADPH via its FAD and FMN prosthetic groups to the [2Fe-2S] cluster of DRE2, another key component of the CIA machinery. In turn, this reduced cluster provides electrons for assembly of cytosolic iron-sulfur cluster proteins. Positively controls H(2)O(2)-induced cell death. In Gibberella zeae (strain ATCC MYA-4620 / CBS 123657 / FGSC 9075 / NRRL 31084 / PH-1) (Wheat head blight fungus), this protein is NADPH-dependent diflavin oxidoreductase 1.